We begin with the raw amino-acid sequence, 307 residues long: UDP-N-acetylenolpyruvoylglucosamine reductase (307 aa).

The FAD-binding PCMH-type domain occupies 27–193 (RVGGPADVVF…LDAVFEGLAD (167 aa)). Arginine 172 is an active-site residue. The Proton donor role is filled by serine 222. Glutamate 299 is an active-site residue.

Belongs to the MurB family. It depends on FAD as a cofactor.

It is found in the cytoplasm. The enzyme catalyses UDP-N-acetyl-alpha-D-muramate + NADP(+) = UDP-N-acetyl-3-O-(1-carboxyvinyl)-alpha-D-glucosamine + NADPH + H(+). The protein operates within cell wall biogenesis; peptidoglycan biosynthesis. Cell wall formation. The chain is UDP-N-acetylenolpyruvoylglucosamine reductase from Caulobacter sp. (strain K31).